We begin with the raw amino-acid sequence, 296 residues long: GTPase Era (296 aa).

The 168-residue stretch at 3–170 folds into the Era-type G domain; the sequence is KSGFVTIVGR…KELMFKYIPE (168 aa). A G1 region spans residues 11–18; it reads GRPNVGKS. A GTP-binding site is contributed by 11-18; the sequence is GRPNVGKS. Residues 37 to 41 are G2; it reads QTTRN. Positions 58 to 61 are G3; sequence DTPG. Residues 58 to 62 and 120 to 123 contribute to the GTP site; these read DTPGI and NKID. A G4 region spans residues 120–123; it reads NKID. The interval 149 to 151 is G5; the sequence is ISA. The KH type-2 domain occupies 201 to 278; that stretch reads LSEEVPHGIA…YIRLWVKVKE (78 aa).

The protein belongs to the TRAFAC class TrmE-Era-EngA-EngB-Septin-like GTPase superfamily. Era GTPase family. Monomer.

It localises to the cytoplasm. Its subcellular location is the cell membrane. Functionally, an essential GTPase that binds both GDP and GTP, with rapid nucleotide exchange. Plays a role in 16S rRNA processing and 30S ribosomal subunit biogenesis and possibly also in cell cycle regulation and energy metabolism. The chain is GTPase Era from Clostridium botulinum (strain Loch Maree / Type A3).